We begin with the raw amino-acid sequence, 48 residues long: uncharacterized protein (48 aa).

This is an uncharacterized protein from Treponema pallidum (strain Nichols).